Consider the following 241-residue polypeptide: B9 domain-containing protein 1 (241 aa).

Positions 1 to 42 are disordered; sequence MSASEGISLPGNEETTPPHEKHKQKAKKAKKKSRSAKESVPN. Residues 20–34 show a composition bias toward basic residues; the sequence is EKHKQKAKKAKKKSR. The 145-residue stretch at 53 to 197 folds into the C2 B9-type domain; it reads FSLSIVGQIV…TSWLLRREPE (145 aa).

It belongs to the B9D family. As to quaternary structure, probable component of the tectonic-like complex (also named MKS complex), composed of B9d1, B9d2, Cc2d2a, Mks1 and tctn. In terms of tissue distribution, expressed in type I sensory neurons (at protein level). Expressed in spermatids and spermatocytes (at protein level).

The protein resides in the cytoplasm. It localises to the cytoskeleton. The protein localises to the cilium basal body. Probable component of the tectonic-like complex (also named MKS complex), a complex localized at the transition zone of primary cilia. Required for ciliary structure and function. The chain is B9 domain-containing protein 1 from Drosophila melanogaster (Fruit fly).